Here is a 138-residue protein sequence, read N- to C-terminus: Probable phospholipase A2 homolog 1 (138 aa).

The N-terminal stretch at 1 to 21 is a signal peptide; the sequence is MPPRSPLLALVFLAAGVLSSA. 6 disulfide bridges follow: Cys29–Cys56, Cys33–Cys62, Cys38–Cys109, Cys49–Cys69, Cys68–Cys93, and Cys75–Cys86. Tyr48, Gly50, and Trp53 together coordinate Ca(2+). The active site involves His72. Asp73 lines the Ca(2+) pocket.

This sequence belongs to the phospholipase A2 family. The cofactor is Ca(2+).

The protein localises to the secreted. It catalyses the reaction a 1,2-diacyl-sn-glycero-3-phosphocholine + H2O = a 1-acyl-sn-glycero-3-phosphocholine + a fatty acid + H(+). Its function is as follows. PA2 catalyzes the calcium-dependent hydrolysis of the 2-acyl groups in 3-sn-phosphoglycerides. Releases lysophospholipids (LPLs) and free fatty acids (FFAs) from membrane phospholipids in response to hormones and other external stimuli. The protein is Probable phospholipase A2 homolog 1 (PLA2-I) of Oryza sativa subsp. japonica (Rice).